The sequence spans 257 residues: Small ribosomal subunit protein uS3 (257 aa).

A KH type-2 domain is found at 39-112 (IRKFLNKKYN…EIVFNVVEVR (74 aa)). The disordered stretch occupies residues 217-257 (HEELRKERQSSASSNHGGGKRRPSRKGPRRSQEDAATEGGN). The span at 234–245 (GGKRRPSRKGPR) shows a compositional bias: basic residues.

This sequence belongs to the universal ribosomal protein uS3 family. As to quaternary structure, part of the 30S ribosomal subunit. Forms a tight complex with proteins S10 and S14.

Binds the lower part of the 30S subunit head. Binds mRNA in the 70S ribosome, positioning it for translation. This Haploplasma axanthum (Acholeplasma axanthum) protein is Small ribosomal subunit protein uS3.